The chain runs to 598 residues: MCGIIGYIGPRKASDVIVEGLKRLEYRGYDSAGIATCYEGKIFIKKGAGKIDELVKKLNFLELPGNIGIGHTRWATHGIPNDTNAHPHTDCTGKIVVVHNGIIENFQELKRELLKRGHVFRSDTDTEVIAHLIEENLRITGNFEDAFRMSLLRLRGSYALVVLFADDPERLYIARKDSPLIIGIGKGEMFMASDIPAFLAYTRRAVFLDDGEYGIVSKDWFTIKDIITGAVKTKEIHEIQWTLEMAEKGGYEHFMLKEIFEQPKAIKDAIYGNVKEAPKVAELLMKYDRIIITGMGTSYHAALVGKYLIQRFGKVPVIVEEASELRYEYEDILDNRSLLIAITQSGETADTVAAMKLAKSKGVEVVGIVNVVGSLATRIADETLYTHAGPEIGVAATKTYTTQLVVLTLLAKELGKLVGIDVSQIEGTIPRLPELVDSSLKINDKIREIAVKLNDKRDFFYIGRGINYPTALEGALKIKEIAYVHAEGLSAGELKHGPLALIEDGIPVVGIAPTGKTFEKMLSNIEEAKARGGFIISLGDDVRLHQVSDIFIRLPKVPEELAPITYIVPLQLLAYHLAVLKGHNPDRPRNLAKSVTVE.

The active-site Nucleophile; for GATase activity is the Cys2. The Glutamine amidotransferase type-2 domain occupies 2–219 (CGIIGYIGPR…DGEYGIVSKD (218 aa)). SIS domains are found at residues 280 to 420 (VAEL…LVGI) and 449 to 588 (IAVK…PDRP). Catalysis depends on Lys593, which acts as the For Fru-6P isomerization activity.

As to quaternary structure, homodimer.

It localises to the cytoplasm. It catalyses the reaction D-fructose 6-phosphate + L-glutamine = D-glucosamine 6-phosphate + L-glutamate. Its function is as follows. Catalyzes the first step in hexosamine metabolism, converting fructose-6P into glucosamine-6P using glutamine as a nitrogen source. This Pyrococcus horikoshii (strain ATCC 700860 / DSM 12428 / JCM 9974 / NBRC 100139 / OT-3) protein is Glutamine--fructose-6-phosphate aminotransferase [isomerizing].